A 134-amino-acid polypeptide reads, in one-letter code: MLTTMLLSCALLLAMPTMLGAQIGLAPLEGIGRLDQALFPELQDLGLQPPLKRTTAERAEEALLQQAEAKALAEVLDPEGRKARSPRRCVRLHESCLGHQVPCCDPCATCYCRFFNAFCYCRKLGTATNPCSRT.

Residues 1 to 20 (MLTTMLLSCALLLAMPTMLG) form the signal peptide. A propeptide spanning residues 21–84 (AQIGLAPLEG…VLDPEGRKAR (64 aa)) is cleaved from the precursor. Disulfide bonds link C89–C104, C96–C110, C103–C121, C107–C131, and C112–C119. The region spanning 89–131 (CVRLHESCLGHQVPCCDPCATCYCRFFNAFCYCRKLGTATNPC) is the Agouti domain. The tract at residues 113-115 (RFF) is interaction with melanocortin receptors.

As to quaternary structure, interacts with melanocortin receptors MC3R, MC4R and MC5R.

The protein resides in the secreted. The protein localises to the golgi apparatus lumen. Its function is as follows. Plays a role in weight homeostasis. Involved in the control of feeding behavior through the central melanocortin system. Acts as alpha melanocyte-stimulating hormone antagonist by inhibiting cAMP production mediated by stimulation of melanocortin receptors within the hypothalamus and adrenal gland. Has very low activity with MC5R. Is an inverse agonist for MC3R and MC4R being able to suppress their constitutive activity. It promotes MC3R and MC4R endocytosis in an arrestin-dependent manner. The chain is Agouti-related protein (AGRP) from Sus scrofa (Pig).